Reading from the N-terminus, the 269-residue chain is Ribonuclease HII (269 aa).

One can recognise an RNase H type-2 domain in the interval 83–269; sequence YLIAGVDEVG…HRMSFLTNIL (187 aa). Residues Asp89, Glu90, and Asp185 each coordinate a divalent metal cation.

It belongs to the RNase HII family. The cofactor is Mn(2+). Mg(2+) serves as cofactor.

It is found in the cytoplasm. It carries out the reaction Endonucleolytic cleavage to 5'-phosphomonoester.. In terms of biological role, endonuclease that specifically degrades the RNA of RNA-DNA hybrids. This Clostridium botulinum (strain Langeland / NCTC 10281 / Type F) protein is Ribonuclease HII.